The sequence spans 231 residues: Coproheme decarboxylase (231 aa).

Lysine 44 is covalently cross-linked (Isoglutamyl lysine isopeptide (Lys-Gln) (interchain with Q-Cter in protein Pup)). Tyrosine 133 is a catalytic residue. Position 156 (histidine 156) interacts with Fe-coproporphyrin III.

It belongs to the ChdC family. Type 2 subfamily. The cofactor is Fe-coproporphyrin III.

It catalyses the reaction Fe-coproporphyrin III + 2 H2O2 + 2 H(+) = heme b + 2 CO2 + 4 H2O. The catalysed reaction is Fe-coproporphyrin III + H2O2 + H(+) = harderoheme III + CO2 + 2 H2O. It carries out the reaction harderoheme III + H2O2 + H(+) = heme b + CO2 + 2 H2O. It participates in porphyrin-containing compound metabolism; protoheme biosynthesis. Involved in coproporphyrin-dependent heme b biosynthesis. Catalyzes the decarboxylation of Fe-coproporphyrin III (coproheme) to heme b (protoheme IX), the last step of the pathway. The reaction occurs in a stepwise manner with a three-propionate intermediate. In Mycolicibacterium smegmatis (strain ATCC 700084 / mc(2)155) (Mycobacterium smegmatis), this protein is Coproheme decarboxylase.